Reading from the N-terminus, the 185-residue chain is 4-nitrophenol 4-monooxygenase/4-nitrocatechol 2-monooxygenase, reductase component (185 aa).

The protein belongs to the non-flavoprotein flavin reductase family. The 4-NP/4-NCA monooxygenase is composed of an oxygenase component NpcA and a reductase component NpcB.

The catalysed reaction is 4-nitrophenol + NADH + O2 + H(+) = 4-nitrocatechol + NAD(+) + H2O. It carries out the reaction 4-nitrocatechol + NADPH + O2 = 2-hydroxy-1,4-benzoquinone + nitrite + NADP(+) + H2O. The enzyme catalyses 4-nitrocatechol + NADH + O2 = 2-hydroxy-1,4-benzoquinone + nitrite + NAD(+) + H2O. The protein operates within aromatic compound metabolism. It participates in xenobiotic degradation. Inhibited by methimazole. In terms of biological role, involved in the degradation of para-nitrophenol (4-NP). Catalyzes both the initial hydroxylation of 4-NP to produce 4-nitrocatechol (4-NCA) and the subsequent oxidative release of the nitro group from 4-NCA to produce 2-hydroxy-1,4-benzoquinone. It can also use 4-nitroresorcinol as substrate with a rate of nitrite release similar to that observed with the two physiological substrates, 4-PN and 4-NCA. In Rhodococcus opacus (Nocardia opaca), this protein is 4-nitrophenol 4-monooxygenase/4-nitrocatechol 2-monooxygenase, reductase component (npcB).